A 444-amino-acid polypeptide reads, in one-letter code: 23S rRNA (uracil(1939)-C(5))-methyltransferase RlmD (444 aa).

Residues 5–67 enclose the TRAM domain; sequence RNRFDRTPFQ…RHFDEAKTVE (63 aa). Residues Cys-80, Cys-86, Cys-89, and Cys-168 each coordinate [4Fe-4S] cluster. S-adenosyl-L-methionine is bound by residues Gln-276, Phe-305, Asn-310, Glu-326, Asp-353, and Asp-374. Cys-400 functions as the Nucleophile in the catalytic mechanism.

Belongs to the class I-like SAM-binding methyltransferase superfamily. RNA M5U methyltransferase family. RlmD subfamily.

The catalysed reaction is uridine(1939) in 23S rRNA + S-adenosyl-L-methionine = 5-methyluridine(1939) in 23S rRNA + S-adenosyl-L-homocysteine + H(+). Its function is as follows. Catalyzes the formation of 5-methyl-uridine at position 1939 (m5U1939) in 23S rRNA. The sequence is that of 23S rRNA (uracil(1939)-C(5))-methyltransferase RlmD from Xanthomonas oryzae pv. oryzae (strain MAFF 311018).